The chain runs to 237 residues: tRNA (guanine-N(1)-)-methyltransferase (237 aa).

S-adenosyl-L-methionine-binding positions include Gly-113 and 133-138; that span reads VGDFIV.

Belongs to the RNA methyltransferase TrmD family. In terms of assembly, homodimer.

Its subcellular location is the cytoplasm. It carries out the reaction guanosine(37) in tRNA + S-adenosyl-L-methionine = N(1)-methylguanosine(37) in tRNA + S-adenosyl-L-homocysteine + H(+). Its function is as follows. Specifically methylates guanosine-37 in various tRNAs. In Hydrogenovibrio crunogenus (strain DSM 25203 / XCL-2) (Thiomicrospira crunogena), this protein is tRNA (guanine-N(1)-)-methyltransferase.